Reading from the N-terminus, the 839-residue chain is RNA-directed RNA polymerase 2a (839 aa).

Residues 508 to 621 (KHCLEIDLSK…FSKLPPVGDP (114 aa)) enclose the RdRp catalytic domain. The segment at 773–824 (NGCVDSSGVDRRPPLSQFAGGETSKTKVSRQKPASEGLQKSQRESAIYSETF) is disordered.

Belongs to the ssRNA positive-strand viruses RNA-directed RNA polymerase family. As to quaternary structure, interacts with replication protein 1a.

It catalyses the reaction RNA(n) + a ribonucleoside 5'-triphosphate = RNA(n+1) + diphosphate. In terms of biological role, RNA-dependent RNA polymerase which replicates the viral genome composed of 3 RNA segments, RNA1, RNA2 and RNA3. The chain is RNA-directed RNA polymerase 2a from Cucumber mosaic virus (strain Q) (CMV).